The following is a 507-amino-acid chain: MQVSVAEISGILKKQIAEYGKEAEVSEVGEVIAVGDGIARAYGLDNVMAGEMVEFEDGTQGMALNLEEDNVGIVIFGEGLAIKEGTTVKRTGRIVDVPVGKGLLGRVTDGLGNPIDDKGPLETTERRLAEVKAPGIIPRKSVHEPLHTGIKALDGLVPIGRGQRELIIGDRQTGKTAVAIDTIINQKRTHETDSPVYCIYVAIGQKRSTVAQVVQTLEENGAMAYTTVVAATASDPAPMQFLSAYTGCAMGEYYRDNGMHALIVYDDLSKQATAYRQMSLILRRPPGREAYPGDVFYIHSRLLERAAKMNDEHGGGSLTALPIIETQDGDVSAYIPTNVISITDGQIFLETDLFYSGIRPAISVGLSVSRVGGSAQVKATKQVAGTLRLDLAQYREMAAFAQFGSDLDATTQKLLHRGKRLMELLKQAQYAPLSMEEQVVSIFAGTRGFLDVVDADAVVKAELELLKQMHAKHSDLLDTIRTSGKLDADTETKLGVAITAIIKEFLA.

169–176 is an ATP binding site; that stretch reads GDRQTGKT.

Belongs to the ATPase alpha/beta chains family. As to quaternary structure, F-type ATPases have 2 components, CF(1) - the catalytic core - and CF(0) - the membrane proton channel. CF(1) has five subunits: alpha(3), beta(3), gamma(1), delta(1), epsilon(1). CF(0) has three main subunits: a(1), b(2) and c(9-12). The alpha and beta chains form an alternating ring which encloses part of the gamma chain. CF(1) is attached to CF(0) by a central stalk formed by the gamma and epsilon chains, while a peripheral stalk is formed by the delta and b chains.

Its subcellular location is the cell inner membrane. It catalyses the reaction ATP + H2O + 4 H(+)(in) = ADP + phosphate + 5 H(+)(out). In terms of biological role, produces ATP from ADP in the presence of a proton gradient across the membrane. The alpha chain is a regulatory subunit. The chain is ATP synthase subunit alpha from Magnetococcus marinus (strain ATCC BAA-1437 / JCM 17883 / MC-1).